A 208-amino-acid chain; its full sequence is Thymidylate kinase (208 aa).

ATP is bound at residue 10 to 17 (GPEGSGKT).

It belongs to the thymidylate kinase family.

The catalysed reaction is dTMP + ATP = dTDP + ADP. In terms of biological role, phosphorylation of dTMP to form dTDP in both de novo and salvage pathways of dTTP synthesis. The protein is Thymidylate kinase of Bacillus cereus (strain AH187).